The chain runs to 353 residues: Photosystem II D2 protein (353 aa).

An N-acetylthreonine modification is found at T2. T2 carries the post-translational modification Phosphothreonine. The chain crosses the membrane as a helical span at residues 41–61; sequence CAYFALGGWFTGTTFVTSWYT. Chlorophyll a is bound at residue H118. The helical transmembrane segment at 125–141 threads the bilayer; sequence GFMLRQFELARSVQLRP. The pheophytin a site is built by Q130 and N143. A helical membrane pass occupies residues 153-166; the sequence is VFVSVFLIYPLGQS. H198 lines the chlorophyll a pocket. Residues 208 to 228 traverse the membrane as a helical segment; that stretch reads AALLCAIHGATVENTLFEDGD. Residues H215 and F262 each coordinate a plastoquinone. Residue H215 coordinates Fe cation. H269 lines the Fe cation pocket. Residues 279–295 form a helical membrane-spanning segment; it reads GLWMSALGVVGLALNLR.

This sequence belongs to the reaction center PufL/M/PsbA/D family. PSII is composed of 1 copy each of membrane proteins PsbA, PsbB, PsbC, PsbD, PsbE, PsbF, PsbH, PsbI, PsbJ, PsbK, PsbL, PsbM, PsbT, PsbX, PsbY, PsbZ, Psb30/Ycf12, at least 3 peripheral proteins of the oxygen-evolving complex and a large number of cofactors. It forms dimeric complexes. The D1/D2 heterodimer binds P680, chlorophylls that are the primary electron donor of PSII, and subsequent electron acceptors. It shares a non-heme iron and each subunit binds pheophytin, quinone, additional chlorophylls, carotenoids and lipids. There is also a Cl(-1) ion associated with D1 and D2, which is required for oxygen evolution. The PSII complex binds additional chlorophylls, carotenoids and specific lipids. serves as cofactor.

The protein resides in the plastid. It is found in the chloroplast thylakoid membrane. It catalyses the reaction 2 a plastoquinone + 4 hnu + 2 H2O = 2 a plastoquinol + O2. Photosystem II (PSII) is a light-driven water:plastoquinone oxidoreductase that uses light energy to abstract electrons from H(2)O, generating O(2) and a proton gradient subsequently used for ATP formation. It consists of a core antenna complex that captures photons, and an electron transfer chain that converts photonic excitation into a charge separation. The D1/D2 (PsbA/PsbD) reaction center heterodimer binds P680, the primary electron donor of PSII as well as several subsequent electron acceptors. D2 is needed for assembly of a stable PSII complex. This Populus deltoides (Eastern poplar) protein is Photosystem II D2 protein.